The following is a 143-amino-acid chain: MAVERTLSIIKPDAVAKNVIGEILTRFEKAGLSVVAAKMVQLSEREAGGFYAEHKERPFFKDLVSFMTSGPVVVQVLEGEGAIAKNRELMGATDPKKAEPGTIRADFAVSIDENAVHGSDSEASAAREIAYFFAATEVCARIR.

6 residues coordinate ATP: Lys-11, Phe-59, Arg-87, Thr-93, Arg-104, and Asn-114. His-117 acts as the Pros-phosphohistidine intermediate in catalysis.

It belongs to the NDK family. As to quaternary structure, homotetramer. The cofactor is Mg(2+).

The protein localises to the cytoplasm. It catalyses the reaction a 2'-deoxyribonucleoside 5'-diphosphate + ATP = a 2'-deoxyribonucleoside 5'-triphosphate + ADP. The catalysed reaction is a ribonucleoside 5'-diphosphate + ATP = a ribonucleoside 5'-triphosphate + ADP. In terms of biological role, major role in the synthesis of nucleoside triphosphates other than ATP. The ATP gamma phosphate is transferred to the NDP beta phosphate via a ping-pong mechanism, using a phosphorylated active-site intermediate. The sequence is that of Nucleoside diphosphate kinase from Azotobacter vinelandii (strain DJ / ATCC BAA-1303).